Here is a 315-residue protein sequence, read N- to C-terminus: Biotin synthase (315 aa).

The 228-residue stretch at 39-266 (NSLQFATLLS…KSAIRLTAGR (228 aa)) folds into the Radical SAM core domain. [4Fe-4S] cluster is bound by residues C54, C58, and C61. [2Fe-2S] cluster is bound by residues C98, C129, C189, and R261.

It belongs to the radical SAM superfamily. Biotin synthase family. In terms of assembly, homodimer. Requires [4Fe-4S] cluster as cofactor. The cofactor is [2Fe-2S] cluster.

It carries out the reaction (4R,5S)-dethiobiotin + (sulfur carrier)-SH + 2 reduced [2Fe-2S]-[ferredoxin] + 2 S-adenosyl-L-methionine = (sulfur carrier)-H + biotin + 2 5'-deoxyadenosine + 2 L-methionine + 2 oxidized [2Fe-2S]-[ferredoxin]. Its pathway is cofactor biosynthesis; biotin biosynthesis; biotin from 7,8-diaminononanoate: step 2/2. In terms of biological role, catalyzes the conversion of dethiobiotin (DTB) to biotin by the insertion of a sulfur atom into dethiobiotin via a radical-based mechanism. The protein is Biotin synthase of Legionella pneumophila (strain Corby).